A 174-amino-acid polypeptide reads, in one-letter code: Co-chaperone protein HscB homolog (174 aa).

Residues 2 to 74 (NYFELFKFSP…IRRAEHMLSL (73 aa)) form the J domain.

This sequence belongs to the HscB family. Interacts with HscA and stimulates its ATPase activity.

Co-chaperone involved in the maturation of iron-sulfur cluster-containing proteins. Seems to help targeting proteins to be folded toward HscA. This is Co-chaperone protein HscB homolog from Shewanella baltica (strain OS223).